A 103-amino-acid polypeptide reads, in one-letter code: Large ribosomal subunit protein bL21 (103 aa).

Belongs to the bacterial ribosomal protein bL21 family. As to quaternary structure, part of the 50S ribosomal subunit. Contacts protein L20.

In terms of biological role, this protein binds to 23S rRNA in the presence of protein L20. The chain is Large ribosomal subunit protein bL21 from Ralstonia pickettii (strain 12J).